The following is a 466-amino-acid chain: FERM domain-containing protein 8 (466 aa).

M1 is subject to N-acetylmethionine. The interval 1-21 (MEGAEGNAGQPGPAERSHRSS) is disordered. S24 is modified (phosphoserine). Residues 30–377 (ADVLVYLADD…YCIELSQAAE (348 aa)) enclose the FERM domain. The tract at residues 379–409 (TLSQESASGPHEAPSPSPPPTQRPKLRRQGS) is disordered. S384 bears the Phosphoserine mark. The span at 391-400 (APSPSPPPTQ) shows a compositional bias: pro residues. The residue at position 409 (S409) is a Phosphoserine. At T420 the chain carries Phosphothreonine. Phosphoserine is present on residues S440 and S447. Residues 442-460 (FSRQLSSSQGSYTVVQPTD) show a composition bias toward polar residues. The interval 442 to 466 (FSRQLSSSQGSYTVVQPTDDSLEQS) is disordered.

Interacts with iRhom proteins, including iRhom2/RHBDF2 (via cytoplasmic N-termini); this interaction leads to mutual protein stabilization. Interacts with LRP6; this interaction affects LRP6-binding to AXIN1. As to expression, widely expressed (at protein level).

It localises to the cytoplasm. Its subcellular location is the cytosol. It is found in the cell membrane. Promotes the cell surface stability of iRhom1/RHBDF1 and iRhom2/RHBDF2 and prevents their degradation via the endolysosomal pathway. By acting on iRhoms, involved in ADAM17-mediated shedding of TNF, amphiregulin/AREG, HBEGF and TGFA from the cell surface. Negatively regulates Wnt signaling, possibly by antagonizing the recruitment of AXIN1 to LRP6. This Mus musculus (Mouse) protein is FERM domain-containing protein 8 (Frmd8).